The primary structure comprises 599 residues: Stromal 70 kDa heat shock-related protein, chloroplastic (599 aa).

Residues 545 to 573 (NQPGAGGEPGAAQAQHQEQSSARQIQRAK) form a disordered region. Residues 554–568 (GAAQAQHQEQSSARQ) are compositionally biased toward low complexity.

The protein belongs to the heat shock protein 70 family.

The protein localises to the plastid. It is found in the chloroplast stroma. Interacts with newly imported chloroplast proteins to assist in their maturation. This is Stromal 70 kDa heat shock-related protein, chloroplastic (CHSP70) from Spinacia oleracea (Spinach).